Reading from the N-terminus, the 185-residue chain is Probable chorismate pyruvate-lyase 2 (185 aa).

Arginine 80, leucine 118, and glutamate 170 together coordinate substrate.

It belongs to the UbiC family.

The protein localises to the cytoplasm. The catalysed reaction is chorismate = 4-hydroxybenzoate + pyruvate. It participates in cofactor biosynthesis; ubiquinone biosynthesis. Removes the pyruvyl group from chorismate, with concomitant aromatization of the ring, to provide 4-hydroxybenzoate (4HB) for the ubiquinone pathway. The polypeptide is Probable chorismate pyruvate-lyase 2 (Pseudomonas entomophila (strain L48)).